A 450-amino-acid polypeptide reads, in one-letter code: 3-phosphoshikimate 1-carboxyvinyltransferase (450 aa).

3 residues coordinate 3-phosphoshikimate: lysine 23, serine 24, and arginine 28. Lysine 23 serves as a coordination point for phosphoenolpyruvate. Positions 96 and 124 each coordinate phosphoenolpyruvate. Positions 167, 168, 169, 196, 311, and 340 each coordinate 3-phosphoshikimate. Position 169 (glutamine 169) interacts with phosphoenolpyruvate. Residue glutamate 311 is the Proton acceptor of the active site. Positions 344, 385, and 410 each coordinate phosphoenolpyruvate. Residues 426 to 450 (GQGWGYPQPRSGQRARRATGQGSGG) are disordered.

This sequence belongs to the EPSP synthase family. As to quaternary structure, monomer.

The protein localises to the cytoplasm. It carries out the reaction 3-phosphoshikimate + phosphoenolpyruvate = 5-O-(1-carboxyvinyl)-3-phosphoshikimate + phosphate. Its pathway is metabolic intermediate biosynthesis; chorismate biosynthesis; chorismate from D-erythrose 4-phosphate and phosphoenolpyruvate: step 6/7. Functionally, catalyzes the transfer of the enolpyruvyl moiety of phosphoenolpyruvate (PEP) to the 5-hydroxyl of shikimate-3-phosphate (S3P) to produce enolpyruvyl shikimate-3-phosphate and inorganic phosphate. The polypeptide is 3-phosphoshikimate 1-carboxyvinyltransferase (Mycobacterium tuberculosis (strain ATCC 25177 / H37Ra)).